Reading from the N-terminus, the 392-residue chain is Phospho-N-acetylmuramoyl-pentapeptide-transferase (392 aa).

10 helical membrane passes run 28-48 (RALM…PFVI), 76-96 (TMGG…WFDL), 100-120 (FVWI…VDDW), 137-157 (YLWQ…SISE), 193-213 (ISYP…IVGS), 225-245 (GLAI…AYVT), 262-282 (SGEL…FLWF), 289-309 (VFMG…IAVI), 314-334 (IVLA…MLQV), and 369-389 (QVVV…LSTL).

Belongs to the glycosyltransferase 4 family. MraY subfamily. Mg(2+) is required as a cofactor.

The protein resides in the cell inner membrane. The catalysed reaction is UDP-N-acetyl-alpha-D-muramoyl-L-alanyl-gamma-D-glutamyl-meso-2,6-diaminopimeloyl-D-alanyl-D-alanine + di-trans,octa-cis-undecaprenyl phosphate = di-trans,octa-cis-undecaprenyl diphospho-N-acetyl-alpha-D-muramoyl-L-alanyl-D-glutamyl-meso-2,6-diaminopimeloyl-D-alanyl-D-alanine + UMP. The protein operates within cell wall biogenesis; peptidoglycan biosynthesis. Catalyzes the initial step of the lipid cycle reactions in the biosynthesis of the cell wall peptidoglycan: transfers peptidoglycan precursor phospho-MurNAc-pentapeptide from UDP-MurNAc-pentapeptide onto the lipid carrier undecaprenyl phosphate, yielding undecaprenyl-pyrophosphoryl-MurNAc-pentapeptide, known as lipid I. The polypeptide is Phospho-N-acetylmuramoyl-pentapeptide-transferase (Polaromonas naphthalenivorans (strain CJ2)).